The chain runs to 309 residues: F-box/LRR-repeat protein At3g48880 (309 aa).

Residues 10-57 (LRRWEELDTDILVRIFQKFSVFELTSGLAHVCRGWRAACCDPILWKTV) enclose the F-box domain. LRR repeat units follow at residues 77–107 (VERR…IFHF), 108–133 (NLFL…VLPA), 159–184 (SIAN…KIMG), and 208–233 (CSAI…NISH).

The sequence is that of F-box/LRR-repeat protein At3g48880 from Arabidopsis thaliana (Mouse-ear cress).